The following is a 659-amino-acid chain: Putative cysteine-rich receptor-like protein kinase 39 (659 aa).

Residues 1–27 form the signal peptide; sequence MGKYSVLMIFIASSLLIVLQNVEIVNA. Gnk2-homologous domains are found at residues 28–134 and 142–253; these read VGCT…NHST and PSVR…LYAF. Residues 28–289 lie on the Extracellular side of the membrane; it reads VGCTGSFFNG…KKKGRSIGYG (262 aa). N-linked (GlcNAc...) asparagine glycans are attached at residues N38, N64, N122, N131, N157, N170, N259, and N274. A helical transmembrane segment spans residues 290 to 310; that stretch reads GIIAIVVVLTFINILVFIGYI. Topologically, residues 311–659 are cytoplasmic; it reads KVYGRRKESY…DDVFTELSCR (349 aa). Positions 353-619 constitute a Protein kinase domain; the sequence is FSSENTLGQG…PTMSSVIIWL (267 aa). ATP-binding positions include 359-367 and K381; that span reads LGQGGFGTV. Phosphotyrosine is present on Y426. D478 (proton acceptor) is an active-site residue. S482 is modified (phosphoserine). Phosphothreonine is present on T518. Y526 carries the post-translational modification Phosphotyrosine.

Belongs to the protein kinase superfamily. Ser/Thr protein kinase family. CRK subfamily.

It is found in the membrane. The enzyme catalyses L-seryl-[protein] + ATP = O-phospho-L-seryl-[protein] + ADP + H(+). The catalysed reaction is L-threonyl-[protein] + ATP = O-phospho-L-threonyl-[protein] + ADP + H(+). The protein is Putative cysteine-rich receptor-like protein kinase 39 (CRK39) of Arabidopsis thaliana (Mouse-ear cress).